The sequence spans 857 residues: Cation/H(+) antiporter 25 (857 aa).

The next 11 helical transmembrane spans lie at Phe65 to Leu85, Arg93 to Gly110, Pro122 to Leu142, Tyr161 to Leu181, Ser194 to Leu214, Phe227 to Glu247, Tyr259 to Val279, Phe313 to Val333, Ile385 to Phe405, Ser413 to Ile435, and Val447 to Tyr467. Ser855 is subject to Phosphoserine.

Belongs to the monovalent cation:proton antiporter 2 (CPA2) transporter (TC 2.A.37) family. CHX (TC 2.A.37.4) subfamily. As to expression, specifically expressed in pollen.

It is found in the membrane. In terms of biological role, may operate as a cation/H(+) antiporter. The protein is Cation/H(+) antiporter 25 (CHX25) of Arabidopsis thaliana (Mouse-ear cress).